The chain runs to 199 residues: Glycerol-3-phosphate acyltransferase (199 aa).

5 consecutive transmembrane segments (helical) span residues 3–23, 50–70, 77–97, 110–130, and 136–156; these read YILI…YLLP, VIGF…VLVF, IHYT…PVFL, GVFF…WISI, and YVSL…FFFN.

This sequence belongs to the PlsY family. Probably interacts with PlsX.

It is found in the cell inner membrane. The catalysed reaction is an acyl phosphate + sn-glycerol 3-phosphate = a 1-acyl-sn-glycero-3-phosphate + phosphate. It participates in lipid metabolism; phospholipid metabolism. Its function is as follows. Catalyzes the transfer of an acyl group from acyl-phosphate (acyl-PO(4)) to glycerol-3-phosphate (G3P) to form lysophosphatidic acid (LPA). This enzyme utilizes acyl-phosphate as fatty acyl donor, but not acyl-CoA or acyl-ACP. This is Glycerol-3-phosphate acyltransferase from Pseudothermotoga lettingae (strain ATCC BAA-301 / DSM 14385 / NBRC 107922 / TMO) (Thermotoga lettingae).